Reading from the N-terminus, the 642-residue chain is G protein-coupled receptor kinase 1 (642 aa).

The segment at 1–202 is N-terminal; the sequence is MEIENIVANT…LEKRPVDKHT (202 aa). One can recognise an RGS domain in the interval 52–188; the sequence is YAFVVEKQPI…AESMYFHRFL (137 aa). Residues 203-470 form the Protein kinase domain; the sequence is FRLYRVLGKG…AEEIRAHPFF (268 aa). ATP is bound by residues 209 to 217 and Lys232; that span reads LGKGGFGEV. The active-site Proton acceptor is the Asp328. Residues 480-545 form the AGC-kinase C-terminal domain; it reads EPVPWKKMEA…GCVSIPWQSE (66 aa). Residues 612–642 are disordered; that stretch reads VEQQQPPKTSTQTPAVRSSRAASASGRTLVI. Low complexity predominate over residues 614–636; it reads QQQPPKTSTQTPAVRSSRAASAS.

The protein belongs to the protein kinase superfamily. AGC Ser/Thr protein kinase family. GPRK subfamily.

It catalyses the reaction [G-protein-coupled receptor] + ATP = [G-protein-coupled receptor]-phosphate + ADP + H(+). Functionally, specifically phosphorylates the activated forms of G protein-coupled receptors. The chain is G protein-coupled receptor kinase 1 (grk-1) from Caenorhabditis elegans.